Reading from the N-terminus, the 313-residue chain is Potassium channel subfamily K member 6 (313 aa).

Residues 1 to 4 (MRRG) lie on the Cytoplasmic side of the membrane. The chain crosses the membrane as a helical span at residues 5 to 25 (ALLASALAAYAGYLALGALLV). Asn79 and Asn85 each carry an N-linked (GlcNAc...) asparagine glycan. An intramembrane region (pore-forming) is located at residues 90–115 (AWDFASALFFASTLVTTVGYGYTTPL). Residues Thr106, Val107, Gly108, and Tyr109 each coordinate K(+). The selectivity filter 1 stretch occupies residues 106–111 (TVGYGY). Residues 121–141 (AFSIVFALLGVPITMLLLTAS) traverse the membrane as a helical segment. Over 142–172 (AQRLSLLLTHAPLSWLSLHWGWPPQRAARWH) the chain is Cytoplasmic. Residues 173 to 193 (LVALLMVIVAIFFLVPAAVFA) form a helical membrane-spanning segment. Positions 199 to 223 (WSFLDAFYFCFISLSTIGLGDYVPG) form an intramembrane region, pore-forming. K(+) is bound by residues Thr214, Ile215, and Gly216. The selectivity filter 2 stretch occupies residues 214 to 219 (TIGLGD). Residues 236–256 (VLVTAYLFLGLVAMVLVLQTF) traverse the membrane as a helical segment. Topologically, residues 257–313 (RRVSDLHGLTELILLPDPDPASLSQDEDDQVAVLDARTDLHQHLSAASHADYASIPR) are cytoplasmic. 2 consecutive short sequence motifs (lysosomal targeting signal) follow at residues 282–290 (DEDDQVAVL) and 308–312 (YASIP).

The protein belongs to the two pore domain potassium channel (TC 1.A.1.8) family. In terms of assembly, homodimer; disulfide-linked. In terms of processing, N-glycosylation is necessary for targeting to lysosomes.

It is found in the late endosome membrane. It localises to the lysosome membrane. The catalysed reaction is K(+)(in) = K(+)(out). Its function is as follows. K(+) channel that conducts outward rectifying currents at the membranes of the endolysosomal system. Active in lysosomes where it regulates lysosome numbers and size. In macrophages, enables K(+) efflux coupled to ATP-induced NLRP3 inflammasome activation upon bacterial infection. Cooperates with ATP-gated P2RX7 to activate NLRP3 inflammasome, with P2RX7 conducting Ca(2+) and Na(+) influx that sets the membrane potential for K(+) efflux. The protein is Potassium channel subfamily K member 6 of Mus musculus (Mouse).